We begin with the raw amino-acid sequence, 251 residues long: Vitamin B12 import ATP-binding protein BtuD (251 aa).

In terms of domain architecture, ABC transporter spans 2–236; it reads IRVNSLQVDS…EVLQSVFGTS (235 aa). ATP is bound at residue 30–37; it reads GPNGCGKS.

Belongs to the ABC transporter superfamily. Vitamin B12 importer (TC 3.A.1.13.1) family. As to quaternary structure, the complex is composed of two ATP-binding proteins (BtuD), two transmembrane proteins (BtuC) and a solute-binding protein (BtuF).

The protein localises to the cell inner membrane. It catalyses the reaction an R-cob(III)alamin(out) + ATP + H2O = an R-cob(III)alamin(in) + ADP + phosphate + H(+). Part of the ABC transporter complex BtuCDF involved in vitamin B12 import. Responsible for energy coupling to the transport system. The polypeptide is Vitamin B12 import ATP-binding protein BtuD (Vibrio cholerae serotype O1 (strain ATCC 39315 / El Tor Inaba N16961)).